The chain runs to 207 residues: Small ribosomal subunit protein uS2 (207 aa).

It belongs to the universal ribosomal protein uS2 family.

This Methanocella arvoryzae (strain DSM 22066 / NBRC 105507 / MRE50) protein is Small ribosomal subunit protein uS2.